A 700-amino-acid polypeptide reads, in one-letter code: Elongation factor G (700 aa).

Residues 10–286 (NKVRNIGIMA…AVIDYLPNPL (277 aa)) form the tr-type G domain. GTP contacts are provided by residues 19-26 (AHIDAGKT), 83-87 (DTPGH), and 137-140 (NKMD).

Belongs to the TRAFAC class translation factor GTPase superfamily. Classic translation factor GTPase family. EF-G/EF-2 subfamily.

It is found in the cytoplasm. Catalyzes the GTP-dependent ribosomal translocation step during translation elongation. During this step, the ribosome changes from the pre-translocational (PRE) to the post-translocational (POST) state as the newly formed A-site-bound peptidyl-tRNA and P-site-bound deacylated tRNA move to the P and E sites, respectively. Catalyzes the coordinated movement of the two tRNA molecules, the mRNA and conformational changes in the ribosome. In Rhodococcus erythropolis (strain PR4 / NBRC 100887), this protein is Elongation factor G.